A 158-amino-acid polypeptide reads, in one-letter code: C-type lection lectoxin-Enh3 (158 aa).

The first 23 residues, 1–23 (MGQFTVVSLGLLAMFLSLSGAKG), serve as a signal peptide directing secretion. 3 disulfides stabilise this stretch: Cys26-Cys37, Cys54-Cys154, and Cys129-Cys146. A C-type lectin domain is found at 33–155 (RNGVCNKLFP…CASLHPFICQ (123 aa)). The Mannose-binding signature appears at 119-121 (EPN). Ca(2+) is bound by residues Glu127, Asn142, and Asp143.

This sequence belongs to the true venom lectin family. Expressed by the venom gland.

Its subcellular location is the secreted. Mannose-binding lectin which recognizes specific carbohydrate structures and agglutinates a variety of animal cells by binding to cell-surface glycoproteins and glycolipids. May be a calcium-dependent lectin. The sequence is that of C-type lection lectoxin-Enh3 from Pseudoferania polylepis (Macleay's water snake).